The following is a 116-amino-acid chain: Somatostatin (116 aa).

An N-terminal signal peptide occupies residues 1 to 24 (MLSCRLQCALAALSIVLALGGVTG). The propeptide occupies 25 to 88 (APSDPRLRQF…QDEMRLELQR (64 aa)). Position 43 is an alanine amide (Ala43). The segment at 62 to 99 (QTENDALEPEDLSQAAEQDEMRLELQRSANSNPAMAPR) is disordered. Residues Cys105 and Cys116 are joined by a disulfide bond.

This sequence belongs to the somatostatin family. Post-translationally, C-terminal amidation of the neuronostatin peptide is required for its biological activity, including for the regulation of mean arterial pressure. In terms of tissue distribution, expressed in the pancreas and the spleen (at protein level).

Its subcellular location is the secreted. Inhibits the secretion of pituitary hormones, including that of growth hormone/somatotropin (GH1), PRL, ACTH, luteinizing hormone (LH) and TSH. Also impairs ghrelin- and GnRH-stimulated secretion of GH1 and LH; the inhibition of ghrelin-stimulated secretion of GH1 can be further increased by neuronostatin. In terms of biological role, may enhance low-glucose-induced glucagon release by pancreatic alpha cells. This effect may be mediated by binding to GPR107 and PKA activation. May regulate cardiac contractile function. May compromise cardiomyocyte viability. In the central nervous system, may impair memory retention and may affect hippocampal excitability. May also have anxiolytic and anorexigenic effects. May play a role in arterial pressure regulation. May inhibit basal, but not ghrelin- or GnRH-stimulated secretion of GH1 or LH, but does not affect the release of other pituitary hormones, including PRL, ACTH, FSH or TSH. Potentiates inhibitory action of somatostatin on ghrelin-stimulated secretion of GH1, but not that on GnRH-stimulated secretion of LH. The chain is Somatostatin (SST) from Sus scrofa (Pig).